A 678-amino-acid polypeptide reads, in one-letter code: UvrABC system protein B (678 aa).

A Helicase ATP-binding domain is found at 31–417; that stretch reads EGLENGLAHQ…KSGGEIIDQV (387 aa). 44–51 contacts ATP; that stretch reads GVTGSGKT. The short motif at 97 to 120 is the Beta-hairpin element; that stretch reads YYDYYQPEAYVPSSDTFIEKDASI. Residues 436-589 enclose the Helicase C-terminal domain; that stretch reads QVDDLLSEAR…QMKYNEARGI (154 aa). Positions 638–673 constitute a UVR domain; the sequence is QQQIKKLEQQMYKYAQDLEFEKAAAVRDQLQQLREH.

Belongs to the UvrB family. As to quaternary structure, forms a heterotetramer with UvrA during the search for lesions. Interacts with UvrC in an incision complex.

The protein localises to the cytoplasm. In terms of biological role, the UvrABC repair system catalyzes the recognition and processing of DNA lesions. A damage recognition complex composed of 2 UvrA and 2 UvrB subunits scans DNA for abnormalities. Upon binding of the UvrA(2)B(2) complex to a putative damaged site, the DNA wraps around one UvrB monomer. DNA wrap is dependent on ATP binding by UvrB and probably causes local melting of the DNA helix, facilitating insertion of UvrB beta-hairpin between the DNA strands. Then UvrB probes one DNA strand for the presence of a lesion. If a lesion is found the UvrA subunits dissociate and the UvrB-DNA preincision complex is formed. This complex is subsequently bound by UvrC and the second UvrB is released. If no lesion is found, the DNA wraps around the other UvrB subunit that will check the other stand for damage. The sequence is that of UvrABC system protein B from Pasteurella multocida (strain Pm70).